The chain runs to 306 residues: Extensin (306 aa).

Positions 1–32 (MGRIARGSKMSSLIVSLLVVLVSLNLASETTA) are cleaved as a signal peptide. Residues 33–306 (KYTYSSPPPP…YTSPPPPHHY (274 aa)) are disordered. Pro residues-rich tracts occupy residues 38 to 122 (SPPP…PKHS), 133 to 152 (SPPPPTPVYKYKSPPPPKHS), 183 to 214 (SPPPPTPVYKYKSPPPPTPVYKYKSPPPPKHS), and 225 to 290 (SPPP…SPPP).

Post-translationally, hydroxylated on proline residues in the S-P-P-P-P repeat. O-glycosylated on hydroxyprolines.

It localises to the secreted. The protein localises to the primary cell wall. Its function is as follows. Structural component in primary cell wall. This chain is Extensin, found in Daucus carota (Wild carrot).